Consider the following 224-residue polypeptide: ATP phosphoribosyltransferase (224 aa).

Belongs to the ATP phosphoribosyltransferase family. Short subfamily. As to quaternary structure, heteromultimer composed of HisG and HisZ subunits.

The protein resides in the cytoplasm. It carries out the reaction 1-(5-phospho-beta-D-ribosyl)-ATP + diphosphate = 5-phospho-alpha-D-ribose 1-diphosphate + ATP. It functions in the pathway amino-acid biosynthesis; L-histidine biosynthesis; L-histidine from 5-phospho-alpha-D-ribose 1-diphosphate: step 1/9. Catalyzes the condensation of ATP and 5-phosphoribose 1-diphosphate to form N'-(5'-phosphoribosyl)-ATP (PR-ATP). Has a crucial role in the pathway because the rate of histidine biosynthesis seems to be controlled primarily by regulation of HisG enzymatic activity. The polypeptide is ATP phosphoribosyltransferase (Cupriavidus pinatubonensis (strain JMP 134 / LMG 1197) (Cupriavidus necator (strain JMP 134))).